Here is an 84-residue protein sequence, read N- to C-terminus: Large ribosomal subunit protein eL34 (84 aa).

It belongs to the eukaryotic ribosomal protein eL34 family.

This Pyrobaculum calidifontis (strain DSM 21063 / JCM 11548 / VA1) protein is Large ribosomal subunit protein eL34.